The sequence spans 849 residues: Protein translocase subunit SecA (849 aa).

ATP contacts are provided by residues Q85, 103-107 (GEGKT), and D493. Zn(2+) is bound by residues C832, C834, C843, and H844.

This sequence belongs to the SecA family. As to quaternary structure, monomer and homodimer. Part of the essential Sec protein translocation apparatus which comprises SecA, SecYEG and auxiliary proteins SecDF. Other proteins may also be involved. Zn(2+) serves as cofactor.

Its subcellular location is the cell membrane. It is found in the cytoplasm. The catalysed reaction is ATP + H2O + cellular proteinSide 1 = ADP + phosphate + cellular proteinSide 2.. Its function is as follows. Part of the Sec protein translocase complex. Interacts with the SecYEG preprotein conducting channel. Has a central role in coupling the hydrolysis of ATP to the transfer of proteins into and across the cell membrane, serving as an ATP-driven molecular motor driving the stepwise translocation of polypeptide chains across the membrane. The chain is Protein translocase subunit SecA from Streptococcus thermophilus (strain CNRZ 1066).